The sequence spans 628 residues: MTYLQQHARSIAEPAAFWAEQARSLAWYQAPANILESLPDGTHRWFADGRLNSAYLALDRQIEEGRGEQTALIYDSPVTGTQDRYSYLRLRDEVARLAGALRALGVGKGDRVIIYMPMVPQAAMAMLACARLGAVHSVVFGGFAPYELALRIDDATPKLVLTASCGLEFDRVIEYKPLVDKALELAIHQPAHVMVWQRPQAPARLHPGRDLDWQDCLAAAEPADPLPVASGDPLYIMYTSGTTGKPKGIVRDNGGHAVAVRYAVRTIYGMQAGDVWWGISDVGWVVGHSLIVYGPLMCGCTTVFYEGKPVRTPDAGAYWRVIEEHRVNSLFCAPTAIRAIRKEDPHGERVKRYDLGSLRHLFLAGEKLDSSTQHWLEEHTGRPVHDHWWQTETGWPVTAPCIGIAGHDLRAGSTNRAVPGYHVQVLDDEGRPLGANRQGAIVIALPLPPGCAQTLWGDHPRYLQAYLGNYPGYYHTGDGGYLDEDGFVYIMGRTDDVINVSGHRLSTGEMEERVAQHQAVAECAVIGVRDELKGHVPLGLVVLKDDAGIAAEQLQRELVALVREQIGALACFQRVVVVKRLPKTRSGKILRAVLRKIADGEDYAAPSTIDDPTILGEIEAALRVRKAG.

This sequence belongs to the ATP-dependent AMP-binding enzyme family.

This is an uncharacterized protein from Pseudomonas aeruginosa (strain ATCC 15692 / DSM 22644 / CIP 104116 / JCM 14847 / LMG 12228 / 1C / PRS 101 / PAO1).